A 364-amino-acid chain; its full sequence is Anthranilate phosphoribosyltransferase (364 aa).

Residues Gly-101, 104–105 (GD), Thr-109, 111–114 (NLST), 129–137 (KHGNRAASS), and Gly-141 each bind 5-phospho-alpha-D-ribose 1-diphosphate. An anthranilate-binding site is contributed by Gly-101. Ser-113 is a binding site for Mg(2+). Residue Asn-132 participates in anthranilate binding. Arg-187 provides a ligand contact to anthranilate. Residues Asp-245 and Glu-246 each contribute to the Mg(2+) site.

The protein belongs to the anthranilate phosphoribosyltransferase family. Homodimer. The cofactor is Mg(2+).

The enzyme catalyses N-(5-phospho-beta-D-ribosyl)anthranilate + diphosphate = 5-phospho-alpha-D-ribose 1-diphosphate + anthranilate. It participates in amino-acid biosynthesis; L-tryptophan biosynthesis; L-tryptophan from chorismate: step 2/5. Functionally, catalyzes the transfer of the phosphoribosyl group of 5-phosphorylribose-1-pyrophosphate (PRPP) to anthranilate to yield N-(5'-phosphoribosyl)-anthranilate (PRA). The sequence is that of Anthranilate phosphoribosyltransferase from Mycolicibacterium gilvum (strain PYR-GCK) (Mycobacterium gilvum (strain PYR-GCK)).